Here is a 668-residue protein sequence, read N- to C-terminus: Probable serine/threonine-protein kinase abkB (668 aa).

2 disordered regions span residues 88–111 and 132–162; these read YTNI…KTTA and EVEE…DDNK. Residues 91-105 are compositionally biased toward polar residues; the sequence is IGGTSPNRQSVPENS. The stretch at 131–163 forms a coiled coil; it reads KEVEEEIIDKNERGKEQEQENKQQKEQKDDNKS. Basic and acidic residues predominate over residues 138–162; sequence IDKNERGKEQEQENKQQKEQKDDNK. A Protein kinase domain is found at 314-668; the sequence is DFERLPINSA…EIPSTYHHHH (355 aa). Residues 320–328 and lysine 346 each bind ATP; that span reads INSASLAQV. The active-site Proton acceptor is aspartate 478.

It belongs to the protein kinase superfamily. ADCK protein kinase family.

The chain is Probable serine/threonine-protein kinase abkB (abkB) from Dictyostelium discoideum (Social amoeba).